The sequence spans 266 residues: Imidazole glycerol phosphate synthase subunit HisF (266 aa).

Residues Asp11 and Asp130 contribute to the active site.

It belongs to the HisA/HisF family. In terms of assembly, heterodimer of HisH and HisF.

Its subcellular location is the cytoplasm. It carries out the reaction 5-[(5-phospho-1-deoxy-D-ribulos-1-ylimino)methylamino]-1-(5-phospho-beta-D-ribosyl)imidazole-4-carboxamide + L-glutamine = D-erythro-1-(imidazol-4-yl)glycerol 3-phosphate + 5-amino-1-(5-phospho-beta-D-ribosyl)imidazole-4-carboxamide + L-glutamate + H(+). The protein operates within amino-acid biosynthesis; L-histidine biosynthesis; L-histidine from 5-phospho-alpha-D-ribose 1-diphosphate: step 5/9. Its function is as follows. IGPS catalyzes the conversion of PRFAR and glutamine to IGP, AICAR and glutamate. The HisF subunit catalyzes the cyclization activity that produces IGP and AICAR from PRFAR using the ammonia provided by the HisH subunit. The polypeptide is Imidazole glycerol phosphate synthase subunit HisF (Albidiferax ferrireducens (strain ATCC BAA-621 / DSM 15236 / T118) (Rhodoferax ferrireducens)).